Reading from the N-terminus, the 101-residue chain is Protein RnfH (101 aa).

The protein belongs to the UPF0125 (RnfH) family.

This chain is Protein RnfH, found in Pseudomonas aeruginosa (strain LESB58).